The chain runs to 534 residues: Serine/threonine-protein kinase 35 (534 aa).

The segment at V32–V176 is disordered. 2 stretches are compositionally biased toward low complexity: residues G39 to A65 and P166 to V176. The Protein kinase domain occupies Y202–V530. ATP is bound by residues I208–V216 and K231. D360 serves as the catalytic Proton acceptor.

The protein belongs to the protein kinase superfamily. Ser/Thr protein kinase family. Interacts with PDLIM1/CLP-36. In terms of processing, autophosphorylated. Expressed in testis.

The protein resides in the nucleus. The protein localises to the nucleolus. It localises to the cytoplasm. The catalysed reaction is L-seryl-[protein] + ATP = O-phospho-L-seryl-[protein] + ADP + H(+). The enzyme catalyses L-threonyl-[protein] + ATP = O-phospho-L-threonyl-[protein] + ADP + H(+). The chain is Serine/threonine-protein kinase 35 (STK35) from Homo sapiens (Human).